Consider the following 198-residue polypeptide: NADH-quinone oxidoreductase subunit C (198 aa).

It belongs to the complex I 30 kDa subunit family. As to quaternary structure, NDH-1 is composed of 14 different subunits. Subunits NuoB, C, D, E, F, and G constitute the peripheral sector of the complex.

Its subcellular location is the cell inner membrane. It carries out the reaction a quinone + NADH + 5 H(+)(in) = a quinol + NAD(+) + 4 H(+)(out). NDH-1 shuttles electrons from NADH, via FMN and iron-sulfur (Fe-S) centers, to quinones in the respiratory chain. The immediate electron acceptor for the enzyme in this species is believed to be ubiquinone. Couples the redox reaction to proton translocation (for every two electrons transferred, four hydrogen ions are translocated across the cytoplasmic membrane), and thus conserves the redox energy in a proton gradient. In Chromobacterium violaceum (strain ATCC 12472 / DSM 30191 / JCM 1249 / CCUG 213 / NBRC 12614 / NCIMB 9131 / NCTC 9757 / MK), this protein is NADH-quinone oxidoreductase subunit C.